Reading from the N-terminus, the 696-residue chain is Transcriptional regulatory protein pro1 (696 aa).

The disordered stretch occupies residues 1-48 (MSTQSPNHHEDITKTSSVNMTTTTTTTKTKAAAKAGTNAAPKQKTQMH). Low complexity predominate over residues 21–40 (TTTTTTTKTKAAAKAGTNAA). Positions 55–82 (CYTCRLRRKKCDEGSPMCTACKHLGLCC) form a DNA-binding region, zn(2)-C6 fungal-type. The disordered stretch occupies residues 112–145 (LSEKSSHTIQTSINTPPGLSHSLPTSATFSDPLD). The span at 118–140 (HTIQTSINTPPGLSHSLPTSATF) shows a compositional bias: polar residues.

The protein localises to the nucleus. May be involved in fruiting body development. This Neurospora crassa (strain ATCC 24698 / 74-OR23-1A / CBS 708.71 / DSM 1257 / FGSC 987) protein is Transcriptional regulatory protein pro1 (adv-1).